The following is a 631-amino-acid chain: Tail sheath protein (631 aa).

It belongs to the myoviridae tail sheath protein family. Homomultimer.

The protein resides in the virion. Its subcellular location is the host cytoplasm. Functionally, polymerizes as an extended structure around the baseplate-tail tube complex. During ejection, the sheath shifts to a contracted form, thereby making the inner tail tube protrude through the host cell envelope. The polypeptide is Tail sheath protein (Salmonella typhi).